Here is a 456-residue protein sequence, read N- to C-terminus: CCA-adding enzyme (456 aa).

ATP is bound by residues Ser-53 and Lys-56. CTP contacts are provided by Ser-53 and Lys-56. Mg(2+) is bound by residues Asp-65, Asp-67, and Asp-119. Positions 142, 161, and 170 each coordinate ATP. Residues His-142, Lys-161, and Tyr-170 each coordinate CTP.

Belongs to the tRNA nucleotidyltransferase/poly(A) polymerase family. Archaeal CCA-adding enzyme subfamily. As to quaternary structure, homodimer. The cofactor is Mg(2+).

It catalyses the reaction a tRNA precursor + 2 CTP + ATP = a tRNA with a 3' CCA end + 3 diphosphate. It carries out the reaction a tRNA with a 3' CCA end + 2 CTP + ATP = a tRNA with a 3' CCACCA end + 3 diphosphate. Functionally, catalyzes the addition and repair of the essential 3'-terminal CCA sequence in tRNAs without using a nucleic acid template. Adds these three nucleotides in the order of C, C, and A to the tRNA nucleotide-73, using CTP and ATP as substrates and producing inorganic pyrophosphate. tRNA 3'-terminal CCA addition is required both for tRNA processing and repair. Also involved in tRNA surveillance by mediating tandem CCA addition to generate a CCACCA at the 3' terminus of unstable tRNAs. While stable tRNAs receive only 3'-terminal CCA, unstable tRNAs are marked with CCACCA and rapidly degraded. The protein is CCA-adding enzyme of Thermococcus kodakarensis (strain ATCC BAA-918 / JCM 12380 / KOD1) (Pyrococcus kodakaraensis (strain KOD1)).